The primary structure comprises 684 residues: MSMPLQRGISGVRVSDSSDDLRDSQMKDKTERARSTENNNLTLRFPFGFLFSNQSSSKHGGGGENGFSADPYSARSRHRLMLLFLKISLVLIVVIALAGSFWWTISISTSSRGHVYHNYRRLQEQLVSDLWDIGEISLGPNRWKELEYCNIESENFVPCFNVSENLALGYSNGDENDRFCGPGSKQECLELPPVKYRVPLRWPTGKDIIWHSNVKITAQEVVSSGSITKRMMMMEDDQISFRSASPMSDEVEDYSHQIAEMIGIKKDNFIEAGVRTILDIGCGYGSFGAHLLSKQILTMCIANYEASGSQVQLTLERGLPAMIGSFISKQLPYPSLSFDMLHCLRCGIDWDQKDGLLLVEIDRVLKPGGYFVWTSPLTNPRNKDHLKRWNFVHDFAESICWTLLNQQDETVVWKKTINTKCYSSRKPGVGPSVCTKGHDVESPYYRPLQMCIGGTRSRRWIPIEGRTRWPSRSNMNKTELSLYGLHPEVLGEDAENWKITVREYWSLLSPLIFSDHPKRPGDEDPSPPYNMLRNVLDMNAQFGGLNSALLEARKSVWVMNVVPTAGPNHLPMILDRGFVGVLHNWCEPFPTYPRTYDLVHADNLLSLQTSQPRKTCLLIDIFTEIDRLLRPEGWVIIRDTAQLVEKARETITQLKWEARVIEVESSSEQRLLICQKPFTKRQSI.

Positions 1-35 are disordered; it reads MSMPLQRGISGVRVSDSSDDLRDSQMKDKTERARS. Residues 1–86 are Cytoplasmic-facing; that stretch reads MSMPLQRGIS…RHRLMLLFLK (86 aa). The span at 19–35 shows a compositional bias: basic and acidic residues; it reads DDLRDSQMKDKTERARS. A helical; Signal-anchor for type II membrane protein transmembrane segment spans residues 87-107; sequence ISLVLIVVIALAGSFWWTISI. Over 108–684 the chain is Lumenal; the sequence is STSSRGHVYH…QKPFTKRQSI (577 aa). N-linked (GlcNAc...) asparagine glycosylation is found at asparagine 161 and asparagine 476.

The protein belongs to the methyltransferase superfamily. In terms of tissue distribution, ubiquitous.

The protein resides in the golgi apparatus membrane. It functions in the pathway glycan metabolism; pectin biosynthesis. In terms of biological role, may be involved in the synthesis of homogalacturonan. Required for normal cell adhesion and plant development. The chain is Probable pectin methyltransferase QUA2 (QUA2) from Arabidopsis thaliana (Mouse-ear cress).